A 344-amino-acid chain; its full sequence is L-rhamnose-proton symporter (344 aa).

10 consecutive transmembrane segments (helical) span residues 4–24, 38–58, 68–88, 101–121, 137–157, 175–195, 207–227, 255–275, 290–310, and 324–344; these read PILL…CFYA, WSLG…WWLL, FDMA…IGNI, MGIG…TPVL, TLLG…AGLL, LILA…MDAA, INAL…GAVV, LIAN…QFFF, ISWM…GLLF, and LVLG…GMAA.

This sequence belongs to the L-rhamnose transporter (TC 2.A.7.6) family.

The protein localises to the cell inner membrane. The catalysed reaction is L-rhamnopyranose(in) + H(+)(in) = L-rhamnopyranose(out) + H(+)(out). Its function is as follows. Uptake of L-rhamnose across the cytoplasmic membrane with the concomitant transport of protons into the cell (symport system). This chain is L-rhamnose-proton symporter, found in Pectobacterium carotovorum subsp. carotovorum (strain PC1).